Here is a 111-residue protein sequence, read N- to C-terminus: Ribonuclease P protein component (111 aa).

Belongs to the RnpA family. In terms of assembly, consists of a catalytic RNA component (M1 or rnpB) and a protein subunit.

It carries out the reaction Endonucleolytic cleavage of RNA, removing 5'-extranucleotides from tRNA precursor.. RNaseP catalyzes the removal of the 5'-leader sequence from pre-tRNA to produce the mature 5'-terminus. It can also cleave other RNA substrates such as 4.5S RNA. The protein component plays an auxiliary but essential role in vivo by binding to the 5'-leader sequence and broadening the substrate specificity of the ribozyme. The polypeptide is Ribonuclease P protein component (Borreliella afzelii (strain PKo) (Borrelia afzelii)).